Consider the following 373-residue polypeptide: uncharacterized protein (373 aa).

The WSC domain occupies 15-101; it reads DFTYLGCYSS…SDSYSVYVDE (87 aa). Disordered regions lie at residues 101 to 171, 183 to 210, and 291 to 316; these read ESEE…SSLS, FSFS…ITTS, and NLSE…RGAA. 2 stretches are compositionally biased toward low complexity: residues 110–171 and 183–204; these read SSAQ…SSLS and FSFS…SSES.

This is an uncharacterized protein from Pichia angusta (Yeast).